A 419-amino-acid chain; its full sequence is 2-amino-3-ketobutyrate coenzyme A ligase, mitochondrial (419 aa).

A mitochondrion-targeting transit peptide spans 1–21; the sequence is MWPGNAWRAALFWVPRGRRAQ. Position 45 is an N6-acetyllysine; alternate (K45). The residue at position 45 (K45) is an N6-succinyllysine; alternate. Residue 134–135 participates in pyridoxal 5'-phosphate binding; that stretch reads CY. H159 contributes to the substrate binding site. Position 187 is an N6-acetyllysine; alternate (K187). K187 carries the N6-succinyllysine; alternate modification. Pyridoxal 5'-phosphate-binding positions include S206, 262–265, and 295–296; these read TLGK and SN. The residue at position 265 (K265) is an N6-(pyridoxal phosphate)lysine. N6-succinyllysine is present on residues K326 and K368. K383 carries the N6-acetyllysine; alternate modification. N6-succinyllysine; alternate is present on K383. Residue R389 participates in substrate binding.

This sequence belongs to the class-II pyridoxal-phosphate-dependent aminotransferase family. Pyridoxal 5'-phosphate is required as a cofactor. As to expression, strongly expressed in heart, brain, liver and pancreas. Also found in lung.

It is found in the mitochondrion. Its subcellular location is the nucleus. The enzyme catalyses glycine + acetyl-CoA = (2S)-2-amino-3-oxobutanoate + CoA. Functionally, pyridoxal phosphate (PLP) dependent enzyme, which catalyzes the cleavage of 2-amino-3-oxobutanoate to glycine and acetyl-CoA. The sequence is that of 2-amino-3-ketobutyrate coenzyme A ligase, mitochondrial from Homo sapiens (Human).